We begin with the raw amino-acid sequence, 320 residues long: D-alanine--D-alanine ligase (320 aa).

The region spanning 120–314 is the ATP-grasp domain; the sequence is SSWFFANSIN…FTNLIAEIIK (195 aa). 147-198 lines the ATP pocket; it reads MKRPYVIKPLTQGSSIGVEVIFEEDDFNFADYDFPYGDQVVIERYIKGREFQ. Mg(2+)-binding residues include E267, E281, and N283.

The protein belongs to the D-alanine--D-alanine ligase family. Mg(2+) serves as cofactor. The cofactor is Mn(2+).

It localises to the cytoplasm. It catalyses the reaction 2 D-alanine + ATP = D-alanyl-D-alanine + ADP + phosphate + H(+). It participates in cell wall biogenesis; peptidoglycan biosynthesis. Cell wall formation. The protein is D-alanine--D-alanine ligase of Rickettsia akari (strain Hartford).